Here is a 92-residue protein sequence, read N- to C-terminus: Protein RnfH (92 aa).

This sequence belongs to the UPF0125 (RnfH) family.

The polypeptide is Protein RnfH (Neisseria gonorrhoeae (strain NCCP11945)).